We begin with the raw amino-acid sequence, 144 residues long: Protein SprT-like (144 aa).

The SprT-like domain maps to 4–143; it reads NKYVQEVSLQ…GKCRGKLTLK (140 aa). H64 lines the Zn(2+) pocket. Residue E65 is part of the active site. H68 is a binding site for Zn(2+).

Belongs to the SprT family. It depends on Zn(2+) as a cofactor.

It localises to the cytoplasm. The chain is Protein SprT-like from Streptococcus suis (strain 98HAH33).